We begin with the raw amino-acid sequence, 361 residues long: tRNA-specific 2-thiouridylase MnmA (361 aa).

Residues 9–16 (GMSGGVDS) and Met35 contribute to the ATP site. The segment at 95–97 (NPD) is interaction with target base in tRNA. Cys100 serves as the catalytic Nucleophile. The cysteines at positions 100 and 196 are disulfide-linked. Gly124 serves as a coordination point for ATP. The segment at 146–148 (KDQ) is interaction with tRNA. Catalysis depends on Cys196, which acts as the Cysteine persulfide intermediate. The tract at residues 308-309 (RY) is interaction with tRNA.

The protein belongs to the MnmA/TRMU family.

It localises to the cytoplasm. The enzyme catalyses S-sulfanyl-L-cysteinyl-[protein] + uridine(34) in tRNA + AH2 + ATP = 2-thiouridine(34) in tRNA + L-cysteinyl-[protein] + A + AMP + diphosphate + H(+). In terms of biological role, catalyzes the 2-thiolation of uridine at the wobble position (U34) of tRNA, leading to the formation of s(2)U34. This Nitrosomonas eutropha (strain DSM 101675 / C91 / Nm57) protein is tRNA-specific 2-thiouridylase MnmA.